The primary structure comprises 510 residues: NEDD8-activating enzyme E1 regulatory subunit (510 aa).

A2 carries the N-acetylalanine modification. N6-acetyllysine is present on residues K6 and K317. The interaction with UBA3 stretch occupies residues 307–320; sequence DMIADSGKYIKLQN.

Belongs to the ubiquitin-activating E1 family. ULA1 subfamily. In terms of assembly, heterodimer of UBA3 and NAE1. The complex binds NEDD8 and UBE2M. Binds APP and TP53BP2. In terms of processing, ubiquitinated by TRIP12, leading to its degradation by the proteasome.

The protein resides in the cell membrane. It participates in protein modification; protein neddylation. Binding of TP53BP2 to the regulatory subunit NAE1 decreases neddylation activity. In terms of biological role, regulatory subunit of the dimeric UBA3-NAE1 E1 enzyme. E1 activates NEDD8 by first adenylating its C-terminal glycine residue with ATP, thereafter linking this residue to the side chain of the catalytic cysteine, yielding a NEDD8-UBA3 thioester and free AMP. E1 finally transfers NEDD8 to the catalytic cysteine of UBE2M. Necessary for cell cycle progression through the S-M checkpoint. Overexpression of NAE1 causes apoptosis through deregulation of NEDD8 conjugation. The covalent attachment of NEDD8 to target proteins is known as 'neddylation' and the process is involved in the regulation of cell growth, viability and development. This Macaca fascicularis (Crab-eating macaque) protein is NEDD8-activating enzyme E1 regulatory subunit (NAE1).